The primary structure comprises 643 residues: Ecto-NOX disulfide-thiol exchanger 1 (643 aa).

In terms of domain architecture, RRM spans 142–221; the sequence is KTVFVGGLPE…GRLHVDFAQA (80 aa). 2 coiled-coil regions span residues 307–342 and 425–521; these read VQSA…LTGI and QAYA…QLKG.

The protein belongs to the ENOX family. The cofactor is Cu cation.

It localises to the cell membrane. It is found in the secreted. Its subcellular location is the extracellular space. Its activity is regulated as follows. Not inhibited by the antitumor sulfonylurea LY181984, the vabilloid capsaicin, and retinoids. Probably acts as a terminal oxidase of plasma electron transport from cytosolic NAD(P)H via hydroquinones to acceptors at the cell surface. Hydroquinone oxidase activity alternates with a protein disulfide-thiol interchange/oxidoreductase activity which may control physical membrane displacements associated with vesicle budding or cell enlargement. The activities oscillate with a period length of 24 minutes and play a role in control of the ultradian cellular biological clock. The chain is Ecto-NOX disulfide-thiol exchanger 1 (Enox1) from Mus musculus (Mouse).